We begin with the raw amino-acid sequence, 413 residues long: Putative competence-damage inducible protein (413 aa).

This sequence belongs to the CinA family.

This is Putative competence-damage inducible protein from Halothermothrix orenii (strain H 168 / OCM 544 / DSM 9562).